Here is a 317-residue protein sequence, read N- to C-terminus: Taste receptor type 2 member 7 (317 aa).

Residues 1–9 (MTDKVQTTL) are Extracellular-facing. The helical transmembrane segment at 10 to 30 (LFLAIGEFSVGILGNAFIGLV) threads the bilayer. The Cytoplasmic portion of the chain corresponds to 31–55 (NCMDWVKKRKIASIDLILTSLAISR). Residues 56–76 (ICLLCVILLDCFMLVLYPDVY) form a helical membrane-spanning segment. Residues 77-94 (ATGKQMRIIDFFWTLTNH) are Extracellular-facing. A helical transmembrane segment spans residues 95–115 (LSIWFATCLSIYYFFKIANFF). Over 116 to 128 (HPLFLWMKWRIDR) the chain is Cytoplasmic. Residues 129-149 (VISWILLGCMVLSVFINLPAT) traverse the membrane as a helical segment. At 150–187 (ENLNADFRRCVKAKRKTNLTWSCRVTKAQHASTKLFLN) the chain is on the extracellular side. An N-linked (GlcNAc...) asparagine glycan is attached at asparagine 167. Residues 188-208 (LVTLLPFSVCLVSFFLLILSL) traverse the membrane as a helical segment. At 209 to 235 (WRHIRRMQLSATGCRDPSTEAHVRALK) the chain is on the cytoplasmic side. The helical transmembrane segment at 236–256 (AVISFLFLFIAYYLSFLIATS) threads the bilayer. Residues 257–266 (SYFIPETELA) lie on the Extracellular side of the membrane. A helical transmembrane segment spans residues 267 to 287 (VIFGEFIALIYPSSHSFILIL). The Cytoplasmic segment spans residues 288 to 317 (GNNKLRRASLKVLWTVMSILKGRKFQQKQI).

It belongs to the G-protein coupled receptor T2R family.

It is found in the membrane. Gustducin-coupled receptor implicated in the perception of bitter compounds in the oral cavity and the gastrointestinal tract. Signals through PLCB2 and the calcium-regulated cation channel TRPM5. The polypeptide is Taste receptor type 2 member 7 (TAS2R7) (Papio hamadryas (Hamadryas baboon)).